Here is a 176-residue protein sequence, read N- to C-terminus: MPEEIATLAGGCFWCTEAAFKLLRGVLEVVPGYAGGHVPHPTYEEVCTGTTGHREAVQVRFDPGVLPYADLLRYFFAVHDPTSEDRQGPDVGPQYSPAIFYHSEEQKRVAEAVMRELAPLYPKPIATKLLPFTTFYPAEAYHRDYFARHPEAPYCRFVIAPKLEKARKAFKSLLRP.

Residue Cys-12 is part of the active site.

This sequence belongs to the MsrA Met sulfoxide reductase family.

It catalyses the reaction L-methionyl-[protein] + [thioredoxin]-disulfide + H2O = L-methionyl-(S)-S-oxide-[protein] + [thioredoxin]-dithiol. The enzyme catalyses [thioredoxin]-disulfide + L-methionine + H2O = L-methionine (S)-S-oxide + [thioredoxin]-dithiol. Functionally, has an important function as a repair enzyme for proteins that have been inactivated by oxidation. Catalyzes the reversible oxidation-reduction of methionine sulfoxide in proteins to methionine. The sequence is that of Peptide methionine sulfoxide reductase MsrA from Thermus thermophilus (strain ATCC 27634 / DSM 579 / HB8).